A 323-amino-acid polypeptide reads, in one-letter code: Probable cell division protein WhiA (323 aa).

The H-T-H motif DNA-binding region spans 275–309 (TLKELGEMLTTGQVSKSGINHRLRKLDQIAERLRS).

The protein belongs to the WhiA family.

Involved in cell division and chromosome segregation. The sequence is that of Probable cell division protein WhiA from Listeria welshimeri serovar 6b (strain ATCC 35897 / DSM 20650 / CCUG 15529 / CIP 8149 / NCTC 11857 / SLCC 5334 / V8).